The primary structure comprises 319 residues: Quinolinate synthase (319 aa).

Positions 35 and 52 each coordinate iminosuccinate. Position 97 (Cys-97) interacts with [4Fe-4S] cluster. Iminosuccinate is bound by residues 123-125 and Ser-140; that span reads YIN. Residue Cys-183 coordinates [4Fe-4S] cluster. Iminosuccinate is bound by residues 209 to 211 and Thr-226; that span reads HPE. Cys-276 contacts [4Fe-4S] cluster.

This sequence belongs to the quinolinate synthase family. Type 2 subfamily. The cofactor is [4Fe-4S] cluster.

The protein localises to the cytoplasm. It carries out the reaction iminosuccinate + dihydroxyacetone phosphate = quinolinate + phosphate + 2 H2O + H(+). Its pathway is cofactor biosynthesis; NAD(+) biosynthesis; quinolinate from iminoaspartate: step 1/1. Catalyzes the condensation of iminoaspartate with dihydroxyacetone phosphate to form quinolinate. This is Quinolinate synthase from Microcystis aeruginosa (strain NIES-843 / IAM M-2473).